Reading from the N-terminus, the 751-residue chain is Cytosolic neutral trehalase (751 aa).

The segment covering 1–10 has biased composition (polar residues); that stretch reads MSQVNTSQGP. The segment at 1–59 is disordered; it reads MSQVNTSQGPVAQGRQRRLSSLSEFNDPFSNAEVYYGPPTDPRKQKQAKPAKINRTRTM. N-acetylserine is present on serine 2. Serine 20 and serine 21 each carry phosphoserine; by PKA. Position 23 is a phosphoserine (serine 23). A compositionally biased stretch (basic residues) spans 45-55; sequence QKQAKPAKINR. A Phosphothreonine modification is found at threonine 58. A Phosphoserine; by PKA modification is found at serine 60. Position 66 is a phosphoserine (serine 66). The interval 73 to 92 is disordered; that stretch reads FGKLQQTRRGSEDDTYSSSQ. Serine 83 is subject to Phosphoserine; by PKA. Ca(2+) is bound by residues aspartate 114, aspartate 116, asparagine 118, glutamine 120, and aspartate 125. Substrate-binding positions include arginine 302, 309–310, asparagine 346, 355–357, glutamate 424, arginine 473, and glycine 476; these read WD and RSQ. Active-site proton donor/acceptor residues include aspartate 478 and glutamate 674.

The protein belongs to the glycosyl hydrolase 37 family. As to quaternary structure, monomer. Interacts with BMH1 dimers; the interaction is direct and activates NTH1. Interacts with BMH2. Requires Ca(2+) as cofactor. In terms of processing, phosphorylated by protein kinase A (PKA); phosphorylation at Ser-60 and Ser-83 is required for activation by the 14-3-3 proteins BMH1 and BMH2.

It is found in the cytoplasm. It carries out the reaction alpha,alpha-trehalose + H2O = alpha-D-glucose + beta-D-glucose. Its pathway is carbohydrate degradation. Its activity is regulated as follows. Activated by calcium. Activated by protein kinase A (PKA)-mediated phosphorylation. In terms of biological role, hydrolyzes intracellular trehalose to glucose. The disaccharide trehalose serves as a storage carbohydrate that is mobilized during nutrient stress. Regulates the level of trehalose as a protectant for cell integrity during heat stress. The chain is Cytosolic neutral trehalase from Saccharomyces cerevisiae (strain ATCC 204508 / S288c) (Baker's yeast).